We begin with the raw amino-acid sequence, 330 residues long: Solute carrier family 25 member 16 (330 aa).

Solcar repeat units follow at residues 32 to 118 (FYWL…YKTL), 126 to 214 (SGHV…LKSV), and 236 to 326 (LKTH…MKQF). The next 6 helical transmembrane spans lie at 33 to 52 (YWLR…KTTV), 95 to 112 (GAMM…FMAF), 132 to 149 (LMAG…TYPL), 189 to 209 (GLMP…FTFG), 242 to 262 (LLCG…FDVT), and 297 to 317 (GLYR…AVAF).

This sequence belongs to the mitochondrial carrier (TC 2.A.29) family. In terms of tissue distribution, mostly in thyroid, liver, lung, kidney and to a lesser extent in heart and skeletal muscle.

The protein resides in the mitochondrion inner membrane. Functionally, may be involved in the transport of coenzyme A in the mitochondrial matrix. Very little is known about the physiological function of this carrier. The protein is Solute carrier family 25 member 16 (SLC25A16) of Bos taurus (Bovine).